Here is a 166-residue protein sequence, read N- to C-terminus: Peptide deformylase (166 aa).

Fe cation is bound by residues cysteine 88 and histidine 130. Glutamate 131 is a catalytic residue. Histidine 134 serves as a coordination point for Fe cation.

The protein belongs to the polypeptide deformylase family. Fe(2+) serves as cofactor.

It carries out the reaction N-terminal N-formyl-L-methionyl-[peptide] + H2O = N-terminal L-methionyl-[peptide] + formate. Functionally, removes the formyl group from the N-terminal Met of newly synthesized proteins. Requires at least a dipeptide for an efficient rate of reaction. N-terminal L-methionine is a prerequisite for activity but the enzyme has broad specificity at other positions. The polypeptide is Peptide deformylase (Thermoanaerobacter sp. (strain X514)).